Consider the following 305-residue polypeptide: tRNA pseudouridine synthase B (305 aa).

Asp-39 functions as the Nucleophile in the catalytic mechanism.

This sequence belongs to the pseudouridine synthase TruB family. Type 1 subfamily.

The catalysed reaction is uridine(55) in tRNA = pseudouridine(55) in tRNA. Responsible for synthesis of pseudouridine from uracil-55 in the psi GC loop of transfer RNAs. The protein is tRNA pseudouridine synthase B of Staphylococcus aureus (strain Newman).